Consider the following 334-residue polypeptide: Magnesium-chelatase 38 kDa subunit (334 aa).

36 to 43 contacts ATP; sequence GDRGTGKS.

This sequence belongs to the Mg-chelatase subunits D/I family.

It carries out the reaction protoporphyrin IX + Mg(2+) + ATP + H2O = Mg-protoporphyrin IX + ADP + phosphate + 3 H(+). Its pathway is porphyrin-containing compound metabolism; bacteriochlorophyll biosynthesis. Involved in bacteriochlorophyll biosynthesis; introduces a magnesium ion into protoporphyrin IX to yield Mg-protoporphyrin IX. This chain is Magnesium-chelatase 38 kDa subunit (bchI), found in Cereibacter sphaeroides (strain ATCC 17023 / DSM 158 / JCM 6121 / CCUG 31486 / LMG 2827 / NBRC 12203 / NCIMB 8253 / ATH 2.4.1.) (Rhodobacter sphaeroides).